A 1205-amino-acid chain; its full sequence is Bromodomain and PHD finger-containing protein 3 (1205 aa).

Disordered stretches follow at residues 1–27 (MRKPRRKSRQNAEGRRSPSPYSLKCSP) and 75–121 (NSNK…SFRM). Serine 17 carries the post-translational modification Phosphoserine. Positions 75 to 84 (NSNKENSEQP) are enriched in polar residues. Residues 89-99 (KSKKPSSKGKK) are compositionally biased toward basic residues. The PHD-type 1 zinc finger occupies 212–262 (DAFCCVCLDDECHNSNVILFCDICNLAVHQECYGVPYIPEGQWLCRCCLQS). Residues 266–299 (PVDCILCPNKGGAFKQTSDGHWAHVVCAIWIPEV) form a C2HC pre-PHD-type zinc finger. The segment at 323-387 (LTCYICKQKG…RKTAYCEAHS (65 aa)) adopts a PHD-type 2 zinc-finger fold. The disordered stretch occupies residues 387 to 472 (SPPGAATARR…AGQDTPSTLP (86 aa)). 2 positions are modified to phosphoserine: serine 400 and serine 403. Over residues 417 to 432 (DGEEEEEEEVEEEEQE) the composition is skewed to acidic residues. Positions 444–456 (VPKKSKMSLKQKI) are enriched in basic residues. An N6-acetyllysine mark is found at lysine 447, lysine 449, and lysine 671. One can recognise a Bromo domain in the interval 589–693 (LELMPFNVLL…DLGGAILRHA (105 aa)). Residues serine 713 and serine 740 each carry the phosphoserine modification. The segment at 779–897 (RQKLAQPPPP…LQLGNEPLQR (119 aa)) is disordered. Over residues 817 to 827 (LQEEPEDDGDR) the composition is skewed to acidic residues. Low complexity predominate over residues 839 to 851 (EPTGPAPSLSEQE). Serine 900 is subject to Phosphoserine. Disordered regions lie at residues 907–926 (LSLMAPDTPAGTPLSGVGRR) and 931–1015 (FKKA…SECS). Over residues 942–955 (RSPDRVLENGEDHG) the composition is skewed to basic and acidic residues. Serine 962 and serine 965 each carry phosphoserine. The span at 980-991 (SCSESEGERSPQ) shows a compositional bias: basic and acidic residues. The PWWP domain occupies 1076–1159 (PLELVWAKCR…RDKVLPLGVE (84 aa)).

Component of some HBO1 complex composed of KAT7/HBO1, MEAF6, ING4 or ING5, and BRPF3. Component of the MOZ/MORF complex composed at least of ING5, KAT6A, KAT6B, MEAF6 and one of BRPF1, BRD1/BRPF2 and BRPF3. Interacts with KAT7/HBO1; the interaction is direct.

Its subcellular location is the nucleus. Functionally, scaffold subunit of various histone acetyltransferase (HAT) complexes, such as the MOZ/MORF and HBO1 complexes, which have a histone H3 acetyltransferase activity. Plays a role in DNA replication initiation by directing KAT7/HBO1 specificity towards histone H3 'Lys-14' acetylation (H3K14ac), thereby facilitating the activation of replication origins. Component of the MOZ/MORF complex which has a histone H3 acetyltransferase activity. This is Bromodomain and PHD finger-containing protein 3 from Homo sapiens (Human).